Here is a 257-residue protein sequence, read N- to C-terminus: UPF0246 protein Shal_1126 (257 aa).

The protein belongs to the UPF0246 family.

In Shewanella halifaxensis (strain HAW-EB4), this protein is UPF0246 protein Shal_1126.